The chain runs to 396 residues: 4-hydroxy-3-methylbut-2-en-1-yl diphosphate synthase (ferredoxin) (396 aa).

[4Fe-4S] cluster contacts are provided by Cys305, Cys308, Cys339, and Glu346.

The protein belongs to the IspG family. [4Fe-4S] cluster is required as a cofactor.

The catalysed reaction is (2E)-4-hydroxy-3-methylbut-2-enyl diphosphate + 2 oxidized [2Fe-2S]-[ferredoxin] + H2O = 2-C-methyl-D-erythritol 2,4-cyclic diphosphate + 2 reduced [2Fe-2S]-[ferredoxin] + H(+). It participates in isoprenoid biosynthesis; isopentenyl diphosphate biosynthesis via DXP pathway; isopentenyl diphosphate from 1-deoxy-D-xylulose 5-phosphate: step 5/6. In terms of biological role, converts 2C-methyl-D-erythritol 2,4-cyclodiphosphate (ME-2,4cPP) into 1-hydroxy-2-methyl-2-(E)-butenyl 4-diphosphate. The protein is 4-hydroxy-3-methylbut-2-en-1-yl diphosphate synthase (ferredoxin) of Gloeobacter violaceus (strain ATCC 29082 / PCC 7421).